Here is a 178-residue protein sequence, read N- to C-terminus: Negative modulator of initiation of replication (178 aa).

Residues 113 to 117 are interaction with DNA; sequence RTRVY.

Belongs to the SeqA family. Homodimer. Polymerizes to form helical filaments.

The protein localises to the cytoplasm. Its function is as follows. Negative regulator of replication initiation, which contributes to regulation of DNA replication and ensures that replication initiation occurs exactly once per chromosome per cell cycle. Binds to pairs of hemimethylated GATC sequences in the oriC region, thus preventing assembly of replication proteins and re-initiation at newly replicated origins. Repression is relieved when the region becomes fully methylated. This chain is Negative modulator of initiation of replication, found in Photobacterium profundum (strain SS9).